A 207-amino-acid polypeptide reads, in one-letter code: Suppressor of IKBKE 1 (207 aa).

Coiled coils occupy residues 4–32 (TIDK…LIDQ) and 154–193 (DAIQ…SLHS). The interval 186–207 (TSKESLHSSKRESEWNFSEKTQ) is disordered. A compositionally biased stretch (basic and acidic residues) spans 189 to 199 (ESLHSSKRESE).

Belongs to the SIKE family. In terms of assembly, interacts with IKBKE and TBK1 via its coiled coil region. Interaction with TBK1 is disrupted upon viral infection or TLR3 stimulation. Interacts with CDC42BPB. Associates with the STRIPAK core complex composed of PP2A catalytic and scaffolding subunits, the striatins (PP2A regulatory subunits), the striatin-associated proteins MOB4, STRIP1 and STRIP2, PDCD10 and members of the STE20 kinases, such as STK24 and STK26.

Suppressor of IKK-epsilon. Associates with the striatin-interacting phosphatase and kinase (STRIPAK) core complex, forming the extended (SIKE1:SLMAP)STRIPAK complex. The (SIKE1:SLMAP)STRIPAK complex dephosphorylates STK3 leading to the inhibition of Hippo signaling and the control of cell growth. The sequence is that of Suppressor of IKBKE 1 (sike1) from Xenopus tropicalis (Western clawed frog).